Consider the following 188-residue polypeptide: Myc target protein 1 (188 aa).

Residues 24-44 (FTVSVAIGLAIGGFLWALFVF) traverse the membrane as a helical segment. A Bipartite nuclear localization signal motif is present at residues 47 to 65 (RRRRASAPISQWSPTRRPR). 4 positions are modified to phosphoserine: Ser-87, Ser-90, Ser-93, and Ser-101.

This sequence belongs to the MYCT1 family. In terms of tissue distribution, highly expressed in lung, heart, and skeletal muscle. Expressed in brain, eye, liver, kidney, smooth muscle, pancreas, thyroid, thymus, submaxillary gland, spleen, testis, ovary, prostate, epididymis, and uterus. Deregulated expression promotes apoptosis in response to growth factor deprivation. Overexpression in synergy with CCNB1 may promote genomic instability.

The protein localises to the nucleus membrane. In terms of biological role, may regulate certain MYC target genes, MYC seems to be a direct upstream transcriptional activator. Does not seem to significantly affect growth cell capacity. Overexpression seems to mediate many of the known phenotypic features associated with MYC, including promotion of apoptosis, alteration of morphology, enhancement of anchorage-independent growth, tumorigenic conversion, promotion of genomic instability and inhibition of hematopoietic differentiation. In Mus musculus (Mouse), this protein is Myc target protein 1 (Myct1).